The chain runs to 514 residues: Vacuolar aminopeptidase 1 (514 aa).

Residues 1-45 (MEEQREILEQLKKTLQMLTVEPSKNNQIANEEKEKKENENSWCIL) constitute a propeptide, required for vacuolar localization. Mediates aggregation and vesicle formation in Cvt pathway. N-linked (GlcNAc...) asparagine glycosylation is found at Asn107 and Asn110. Residue His132 coordinates Zn(2+). His210 serves as a coordination point for substrate. Residues Asp303, Glu339, and Glu340 each coordinate Zn(2+). Glu339 serves as a coordination point for substrate. Ser356 is subject to Phosphoserine. Position 385 (Asp385) interacts with Zn(2+). Substrate-binding residues include Asp385 and His388. Asn448 is a glycosylation site (N-linked (GlcNAc...) asparagine). His479 is a binding site for Zn(2+).

Belongs to the peptidase M18 family. As to quaternary structure, homododecamer. The precursor form of aminopeptidase 1 (prApe1) assembles into dodecamers and further aggregates into higher multimers (the Ape1 complex) in the cytoplasm. The Ape1 complex is disaggregated in the vacuolar lumen, but mature aminopeptidase 1 (mApe1) retains its dodecameric form. Dodecamer assembly in the cytoplasm is essential for formation of an enzymatically active complex. If cytoplasmic homododecamerization of prApe1 is disturbed in mutants, homododecamers of mApe1 will form in the vacuole, but they are enzymatically inactive. Interacts with ATG19. Zn(2+) serves as cofactor. Synthesized in a precursor form (prApe1) that has an amino-terminal propeptide. The N-terminal extension of the 61 kDa precursor is proteolytically processed in two sequential steps. The first step involves proteinase A (PrA/PEP4) and produces a 55 kDa unstable intermediate (iAPI). The second step involves proteinase B (PrB/PRB1) and converts iAPI into the 50 kDa stable, mature enzyme (mApe1).

Its subcellular location is the vacuole. It catalyses the reaction Release of an N-terminal amino acid, preferably a neutral or hydrophobic one, from a polypeptide. Aminoacyl-arylamides are poor substrates.. With respect to regulation, strongly and specifically activated by Cl(-) and Br(-), which act as positive allosteric effectors. Inactivated by metal-chelating agents. In terms of biological role, resident vacuolar enzyme that catalyzes the removal of amino acids from the N-terminus of peptides and proteins. Also acts as the major cargo protein of the cytoplasm-to-vacuole targeting (Cvt) pathway. The precursor form of aminopeptidase 1 (prApe1) assembles into dodecamers and the propeptide mediates the aggregation of dodecamers into higher multimers. The multimers are then recognized via the propeptide by their receptor ATG19, and ATG19 further interacts with ATG11, which tethers the APE1-ATG19 complex to the pre-autophagosomal structure (PAS). The cargo-receptor complex (also Cvt complex) is selectively enwrapped by a double-membrane structure termed the Cvt vesicle under vegetative growth conditions and by a similar but larger double-membrane structure termed the autophagosome under nitrogen starvation conditions. The Cvt vesicle or the autophagosome fuses with the vacuolar membrane and release its content in the vacuolar lumen. In the vacuole, prApe1 is processed into mature aminopeptidase 1 (mApe1). This Saccharomyces cerevisiae (strain ATCC 204508 / S288c) (Baker's yeast) protein is Vacuolar aminopeptidase 1.